The following is a 939-amino-acid chain: Trafficking kinesin-binding protein 1 (939 aa).

In terms of domain architecture, HAP1 N-terminal spans 46-353 (LEEQLPHYKL…EELKNLRNKT (308 aa)). Positions 106 to 354 (KTYNDIDAVT…ELKNLRNKTM (249 aa)) form a coiled coil. Residues 359-509 (RYHSLGLFPM…SLRRENYLSE (151 aa)) form an interaction with HGS region. S444 carries O-linked (GlcNAc) serine glycosylation. A disordered region spans residues 472–492 (LGNEDHNKKPGTPGTPGSHDL). Positions 490-524 (HDLETALRRLSLRRENYLSERRFFEEEQERKLREL) form a coiled coil. Residue S534 is modified to Phosphoserine. The interval 655–669 (PGKCMSQTNSTFTFT) is interaction with OGT. O-linked (GlcNAc) serine glycosylation is found at S677 and S716. Phosphoserine occurs at positions 716 and 905.

Belongs to the milton family. In terms of assembly, interacts with RHOT1 and RHOT2. Found in a complex with KIF5B, OGT, RHOT1 and RHOT2. Interacts with HGS. Interacts with GABRA1. Interacts with KIF5C. Interacts with OGT; stable interaction is not required for glycosylation of this protein by OGT. Isoform 1 interacts with OGT. Post-translationally, O-glycosylated. Glycosylated by OGT; glycosylation in response to increased extracellular glucose levels is required for and leads to regulation of mitochondrial motility by OGT. In terms of tissue distribution, widely expressed with the greatest expression in brain, liver and kidney. Detected throughout the CNS, including the cortex, hippocamps, thalamus and various subcortical nuclei of the forebrain and midbrain, the granule of Purkinje layers of the cerebellum and the gray matter of the spinal cord. High level detected in lower moter neurons (at protein level).

The protein localises to the cytoplasm. It localises to the nucleus. The protein resides in the mitochondrion. Its subcellular location is the early endosome. It is found in the endosome. The protein localises to the mitochondrion membrane. It localises to the cell cortex. Functionally, involved in the regulation of endosome-to-lysosome trafficking, including endocytic trafficking of EGF-EGFR complexes and GABA-A receptors. Involved in mitochondrial motility. When O-glycosylated, abolishes mitochondrial motility. Crucial for recruiting OGT to the mitochondrial surface of neuronal processes. TRAK1 and RHOT form an essential protein complex that links KIF5 to mitochondria for light chain-independent, anterograde transport of mitochondria. This Mus musculus (Mouse) protein is Trafficking kinesin-binding protein 1 (Trak1).